Here is a 346-residue protein sequence, read N- to C-terminus: MAAAQAVEEMRTRVVLGEFGVRNVHTTDFPGNYSGYDDAWDQDRFEKNFRVDVVHMDENSLEFDMVGIDAAIANAFRRILLAEVPTMAVEKVLVYNNTSIVQDEILAHRLGLIPIHADPRLFEYRNQGDEGGTEIDTLQFRLQVRCTRNPHAAKDSSDPNELYVNHRVYTRHMTWVPLGNQADLFPEGAIRPVHDDILIAQLRPGQEIDLLMHCVKGIGKDHAKFSPVATASYRLLPDITLLEPVEGEAAEELSRCFSPGVIEVQEIQGKKVARVANPRLDTFSREVFRNEKLKKVVRLARVRDHFIFSVESTGVLPPDVLVSEAIKVLMGKCQRFLDELDAVQMD.

The residue at position 2 (A2) is an N-acetylalanine.

Belongs to the archaeal Rpo3/eukaryotic RPB3 RNA polymerase subunit family. As to quaternary structure, component of the RNA polymerase I and RNA polymerase III complexes consisting of at least 13 and 17 subunits, respectively. Pol I complex consists of a ten-subunit catalytic core composed of POLR1A/RPA1, POLR1B/RPA2, POLR1C/RPAC1, POLR1D/RPAC2, POLR1H/RPA12, POLR2E/RPABC1, POLR2F/RPABC2, POLR2H/RPABC3, POLR2K/RPABC4 and POLR2L/RPABC5; a mobile stalk subunit POLR1F/RPA43 protruding from the core and additional subunits homologous to general transcription factors POLR1E/RPA49 and POLR1G/RPA34. Part of Pol I pre-initiation complex (PIC), in which Pol I core assembles with RRN3 and promoter-bound UTBF and SL1/TIF-IB complex. Pol III complex consists of a ten-subunit catalytic core composed of POLR3A/RPC1, POLR3B/RPC2, POLR1C/RPAC1, POLR1D/RPAC2, POLR3K/RPC10, POLR2E/RPABC1, POLR2F/RPABC2, POLR2H/RPABC3, POLR2K/RPABC4 and POLR2L/RPABC5; a mobile stalk composed of two subunits POLR3H/RPC8 and CRCP/RPC9, protruding from the core and functioning primarily in transcription initiation; and additional subunits homologous to general transcription factors of the RNA polymerase II machinery, POLR3C/RPC3-POLR3F/RPC6-POLR3G/RPC7 heterotrimer required for transcription initiation and POLR3D/RPC4-POLR3E/RPC5 heterodimer involved in both transcription initiation and termination.

Its subcellular location is the nucleus. It localises to the cytoplasm. It is found in the cytosol. Functionally, DNA-dependent RNA polymerase catalyzes the transcription of DNA into RNA using the four ribonucleoside triphosphates as substrates. Common component of RNA polymerases I and III which synthesize ribosomal RNA precursors and short non-coding RNAs including 5S rRNA, snRNAs, tRNAs and miRNAs, respectively. POLR1C/RPAC1 is part of the polymerase core and may function as a clamp element that moves to open and close the cleft. This Bos taurus (Bovine) protein is DNA-directed RNA polymerases I and III subunit RPAC1 (POLR1C).